Consider the following 151-residue polypeptide: Regulatory protein RecX (151 aa).

The protein belongs to the RecX family.

It is found in the cytoplasm. Functionally, modulates RecA activity. The protein is Regulatory protein RecX of Haemophilus ducreyi (strain 35000HP / ATCC 700724).